Consider the following 69-residue polypeptide: ATP synthase subunits region ORF 1 (69 aa).

This chain is ATP synthase subunits region ORF 1, found in Fuscovulum blasticum (Rhodobacter blasticus).